A 221-amino-acid chain; its full sequence is Deep sea actinoporin Cjtox II (221 aa).

The first 19 residues, Met-1–Ala-19, serve as a signal peptide directing secretion. Residues Leu-20–Lys-42 constitute a propeptide that is removed on maturation. 7 residues coordinate phosphocholine: Ser-96, Val-129, Ser-147, Pro-149, Tyr-175, Tyr-179, and Tyr-180. Residues Ser-147–Lys-162 form a trp-rich region, which is important for the binding to lipid membrane region. A Cell attachment site, crucial for protein stability motif is present at residues Lys-186–Asp-188.

It belongs to the actinoporin family. Sea anemone subfamily. Octamer or nonamer in membranes. Monomer in the soluble state. In terms of tissue distribution, expressed in actinopharynx and in gastric filaments. Is not expressed in tentacles.

It is found in the secreted. It localises to the nematocyst. The protein localises to the target cell membrane. Its function is as follows. May be involved in digestion of prey. Pore-forming protein that forms cations-selective hydrophilic pores of around 1 nm and causes cytolysis. Pore formation is a multi-step process that involves specific recognition of membrane sphingomyelin (but neither cholesterol nor phosphatidylcholine) using aromatic rich region and adjacent phosphocholine (POC) binding site, firm binding to the membrane (mainly driven by hydrophobic interactions) accompanied by the transfer of the N-terminal region to the lipid-water interface and finally pore formation after oligomerization of monomers. Shows hemolytic activity on equine erythrocytes. Hemolysis is highly inhibited in presence of sphingomyelin, suggesting that this protein targets sphingomyelin. This is Deep sea actinoporin Cjtox II from Cribrinopsis japonica (Deep-sea anemone).